We begin with the raw amino-acid sequence, 322 residues long: Cysteine synthase (322 aa).

Positions 8 and 35 each coordinate hydrogen sulfide. Lys-42 carries the N6-(pyridoxal phosphate)lysine modification. Residues Asn-72 and Gly-177–Thr-181 each bind pyridoxal 5'-phosphate. Leu-269 contributes to the hydrogen sulfide binding site. Residue Ser-273 participates in pyridoxal 5'-phosphate binding.

This sequence belongs to the cysteine synthase/cystathionine beta-synthase family. Homodimer. Pyridoxal 5'-phosphate serves as cofactor.

The enzyme catalyses O-acetyl-L-serine + hydrogen sulfide = L-cysteine + acetate. It participates in amino-acid biosynthesis; L-cysteine biosynthesis; L-cysteine from L-serine: step 2/2. This chain is Cysteine synthase (cysK), found in Buchnera aphidicola subsp. Schizaphis graminum (strain Sg).